The following is a 144-amino-acid chain: Maximins z/Hv (144 aa).

Residues 1-18 (MNFKYIVAVSFLIASGYA) form the signal peptide. The propeptide occupies 19-43 (RSEENDVQSLSQREVLEEESLREIR). At N70 the chain carries Asparagine amide. The propeptide occupies 74 to 123 (TAEDHEVMKRLKAVMRDLDSLDHPEEASERETRGFNQEEIANLFTKKEKR). Position 143 is an isoleucine amide (I143).

Belongs to the bombinin family. In terms of tissue distribution, expressed by the skin glands.

It localises to the secreted. In terms of biological role, maximin-z shows antimicrobial activity against bacteria and against the fungus C.albicans. It has little hemolytic activity. Maximin-Hv shows antimicrobial activity against bacteria and against the fungus C.albicans. Shows strong hemolytic activity. The sequence is that of Maximins z/Hv from Bombina maxima (Giant fire-bellied toad).